The chain runs to 288 residues: MKRARLIIITGLSGSGKTTAARALEDEGFFVVDNLPLVLLPEFLKLHAGSAVAGSNVAVVVDVRNKPYLEGYKQTLAEVRSAGHVVDIFFFDAVDDVLLRRYSETRRRHPLSQKEGVAESIRQERALLGGIMDLSTEIIDSSWLTPHQLRARVVHMVCGDDKGNPLAVLVQSFGYRYGIPQGSDLVMDVRFLPNPHFVPDLRPQTGLSQGVRDFVLGQPACREFLDRFNHLLDYLLPSYRKEGKSYLTISIGCTGGRHRSVAIAEHLRYAIQGEDMVVDGLHRDVAKE.

11-18 (GLSGSGKT) contributes to the ATP binding site. 62 to 65 (DVRN) serves as a coordination point for GTP.

It belongs to the RapZ-like family.

In terms of biological role, displays ATPase and GTPase activities. The polypeptide is Nucleotide-binding protein Pcar_1935 (Syntrophotalea carbinolica (strain DSM 2380 / NBRC 103641 / GraBd1) (Pelobacter carbinolicus)).